A 71-amino-acid polypeptide reads, in one-letter code: Defensin-like protein 124 (71 aa).

The first 25 residues, 1–25 (MSKPTVIVIFMAILVLGMATKETQG), serve as a signal peptide directing secretion. Disulfide bonds link Cys28/Cys71, Cys40/Cys60, Cys45/Cys65, and Cys49/Cys67.

Belongs to the DEFL family.

Its subcellular location is the secreted. The chain is Defensin-like protein 124 (LCR16) from Arabidopsis thaliana (Mouse-ear cress).